Reading from the N-terminus, the 703-residue chain is Zinc finger CCCH domain-containing protein 36 (703 aa).

4 disordered regions span residues 1 to 42 (MAGG…DPNG), 112 to 176 (LQLH…MKNK), 204 to 242 (VSGS…AGSS), and 442 to 481 (HGTL…SSSQ). Over residues 9-25 (GLPAAGEAAKAGRVGVG) the composition is skewed to low complexity. Basic and acidic residues predominate over residues 112–125 (LQLHGDEKYQKKAG). The span at 149 to 169 (VSQSPPDSNALSSQRFGSSSP) shows a compositional bias: polar residues. The C3H1-type zinc finger occupies 176–203 (KTRKRTCTFYAQGRCKNGKSCTFLHEGE). The span at 451-468 (TPDKDASHHKGADFDKGG) shows a compositional bias: basic and acidic residues. Over residues 470–481 (SRSTLHVSSSSQ) the composition is skewed to low complexity.

This chain is Zinc finger CCCH domain-containing protein 36, found in Oryza sativa subsp. japonica (Rice).